The chain runs to 255 residues: Small ribosomal subunit protein uS2 (255 aa).

The segment at 231–255 (RLQTGAEEEFSTEGEEVVEETPAEA) is disordered. Acidic residues predominate over residues 236–255 (AEEEFSTEGEEVVEETPAEA).

The protein belongs to the universal ribosomal protein uS2 family.

The polypeptide is Small ribosomal subunit protein uS2 (Citrifermentans bemidjiense (strain ATCC BAA-1014 / DSM 16622 / JCM 12645 / Bem) (Geobacter bemidjiensis)).